The following is a 79-amino-acid chain: Sec-independent protein translocase protein TatA (79 aa).

A helical membrane pass occupies residues 1-21 (MFSGISIWQLLILLAIVVLLF). 2 stretches are compositionally biased toward basic and acidic residues: residues 44 to 58 (MKDGEDEQDHKRLAD) and 66 to 79 (QDAEQKAEQEKDKA). The tract at residues 44-79 (MKDGEDEQDHKRLADDDQPQNKQDAEQKAEQEKDKA) is disordered.

This sequence belongs to the TatA/E family. In terms of assembly, the Tat system comprises two distinct complexes: a TatABC complex, containing multiple copies of TatA, TatB and TatC subunits, and a separate TatA complex, containing only TatA subunits. Substrates initially bind to the TatABC complex, which probably triggers association of the separate TatA complex to form the active translocon.

It is found in the cell inner membrane. In terms of biological role, part of the twin-arginine translocation (Tat) system that transports large folded proteins containing a characteristic twin-arginine motif in their signal peptide across membranes. TatA could form the protein-conducting channel of the Tat system. The sequence is that of Sec-independent protein translocase protein TatA from Alcanivorax borkumensis (strain ATCC 700651 / DSM 11573 / NCIMB 13689 / SK2).